Consider the following 184-residue polypeptide: Protein GrpE (184 aa).

The span at 1-12 shows a compositional bias: basic and acidic residues; sequence MADEQLNEKDLN. The interval 1–22 is disordered; it reads MADEQLNEKDLNAEEAGAVDNG.

This sequence belongs to the GrpE family. Homodimer.

Its subcellular location is the cytoplasm. Functionally, participates actively in the response to hyperosmotic and heat shock by preventing the aggregation of stress-denatured proteins, in association with DnaK and GrpE. It is the nucleotide exchange factor for DnaK and may function as a thermosensor. Unfolded proteins bind initially to DnaJ; upon interaction with the DnaJ-bound protein, DnaK hydrolyzes its bound ATP, resulting in the formation of a stable complex. GrpE releases ADP from DnaK; ATP binding to DnaK triggers the release of the substrate protein, thus completing the reaction cycle. Several rounds of ATP-dependent interactions between DnaJ, DnaK and GrpE are required for fully efficient folding. The sequence is that of Protein GrpE from Pseudomonas putida (strain W619).